Here is a 227-residue protein sequence, read N- to C-terminus: Phosphoribosylformylglycinamidine synthase subunit PurQ (227 aa).

Residues 3-225 (FAVIVFPGSN…LKQWRETYVV (223 aa)) enclose the Glutamine amidotransferase type-1 domain. C86 (nucleophile) is an active-site residue. Catalysis depends on residues H194 and E196.

Part of the FGAM synthase complex composed of 1 PurL, 1 PurQ and 2 PurS subunits.

The protein localises to the cytoplasm. It carries out the reaction N(2)-formyl-N(1)-(5-phospho-beta-D-ribosyl)glycinamide + L-glutamine + ATP + H2O = 2-formamido-N(1)-(5-O-phospho-beta-D-ribosyl)acetamidine + L-glutamate + ADP + phosphate + H(+). The catalysed reaction is L-glutamine + H2O = L-glutamate + NH4(+). Its pathway is purine metabolism; IMP biosynthesis via de novo pathway; 5-amino-1-(5-phospho-D-ribosyl)imidazole from N(2)-formyl-N(1)-(5-phospho-D-ribosyl)glycinamide: step 1/2. Part of the phosphoribosylformylglycinamidine synthase complex involved in the purines biosynthetic pathway. Catalyzes the ATP-dependent conversion of formylglycinamide ribonucleotide (FGAR) and glutamine to yield formylglycinamidine ribonucleotide (FGAM) and glutamate. The FGAM synthase complex is composed of three subunits. PurQ produces an ammonia molecule by converting glutamine to glutamate. PurL transfers the ammonia molecule to FGAR to form FGAM in an ATP-dependent manner. PurS interacts with PurQ and PurL and is thought to assist in the transfer of the ammonia molecule from PurQ to PurL. The chain is Phosphoribosylformylglycinamidine synthase subunit PurQ from Bacillus mycoides (strain KBAB4) (Bacillus weihenstephanensis).